Consider the following 232-residue polypeptide: Very-long-chain (3R)-3-hydroxyacyl-CoA dehydratase 4 (232 aa).

Residues 1 to 19 (MGPLALPAWLQPRYRKNAY) are Cytoplasmic-facing. Residues 20–40 (LFIYYLIQFCGHSWIFTNMTV) traverse the membrane as a helical segment. The Lumenal segment spans residues 41-56 (RFFSFGKDSMVDTFYA). Residues 57 to 77 (IGLVMRLCQSVSLLELLHIYV) form a helical membrane-spanning segment. Over 78 to 112 (GIESNHLLPRFLQLTERIIILFVVITSQEEVQEKY) the chain is Cytoplasmic. The chain crosses the membrane as a helical span at residues 113–133 (VVCVLFVFWNLLDMVRYTYSM). At 134–135 (LS) the chain is on the lumenal side. A helical membrane pass occupies residues 136-156 (VIGISYAVLTWLSQTLWMPIY). Y156 is an active-site residue. Position 157 (P157) is a topological domain, cytoplasmic. Residues 158–178 (LCVLAEAFAIYQSLPYFESFG) form a helical membrane-spanning segment. The active site involves E163. Residues 179–189 (TYSTKLPFDLS) lie on the Lumenal side of the membrane. Residues 190–210 (IYFPYVLKIYLMMLFIGMYFT) traverse the membrane as a helical segment. Topologically, residues 211-232 (YSHLYSERRDILGIFPIKKKKM) are cytoplasmic.

The protein belongs to the very long-chain fatty acids dehydratase HACD family. In terms of assembly, may interact with enzymes of the ELO family (including ELOVL1); with those enzymes that mediate condensation, the first of the four steps of the reaction cycle responsible for fatty acids elongation, may be part of a larger fatty acids elongase complex. Highly expressed in leukocytes, and low expression in heart, spleen, kidney, and placenta.

The protein resides in the endoplasmic reticulum membrane. It carries out the reaction a very-long-chain (3R)-3-hydroxyacyl-CoA = a very-long-chain (2E)-enoyl-CoA + H2O. The enzyme catalyses (3R)-hydroxyhexadecanoyl-CoA = (2E)-hexadecenoyl-CoA + H2O. The protein operates within lipid metabolism; fatty acid biosynthesis. In terms of biological role, catalyzes the third of the four reactions of the long-chain fatty acids elongation cycle. This endoplasmic reticulum-bound enzymatic process, allows the addition of two carbons to the chain of long- and very long-chain fatty acids/VLCFAs per cycle. This enzyme catalyzes the dehydration of the 3-hydroxyacyl-CoA intermediate into trans-2,3-enoyl-CoA, within each cycle of fatty acid elongation. Thereby, it participates in the production of VLCFAs of different chain lengths that are involved in multiple biological processes as precursors of membrane lipids and lipid mediators. This is Very-long-chain (3R)-3-hydroxyacyl-CoA dehydratase 4 from Homo sapiens (Human).